Here is a 137-residue protein sequence, read N- to C-terminus: uncharacterized protein (137 aa).

Residues 75-91 (MFLDAMVILAVASGVSL) traverse the membrane as a helical segment. The interval 93–116 (PQLPGRRSHNASTPGAKKPGKDHG) is disordered.

The protein resides in the membrane. This is an uncharacterized protein from Saccharomyces cerevisiae (strain ATCC 204508 / S288c) (Baker's yeast).